The following is a 179-amino-acid chain: Large ribosomal subunit protein uL6 (179 aa).

This sequence belongs to the universal ribosomal protein uL6 family. In terms of assembly, part of the 50S ribosomal subunit.

This protein binds to the 23S rRNA, and is important in its secondary structure. It is located near the subunit interface in the base of the L7/L12 stalk, and near the tRNA binding site of the peptidyltransferase center. This is Large ribosomal subunit protein uL6 from Bifidobacterium adolescentis (strain ATCC 15703 / DSM 20083 / NCTC 11814 / E194a).